A 268-amino-acid chain; its full sequence is Trypsin-like protease (268 aa).

The signal sequence occupies residues 1–41; sequence MTHTTTIAAKRGGLALAKKAAAAGAVALAVASLQPVSAAHA. Residues 42-45 constitute a propeptide, activation peptide; the sequence is ADAR. Positions 46-266 constitute a Peptidase S1 domain; the sequence is VIGGKPAAQN…FAKDIAKAAS (221 aa). Cys-67 and Cys-83 form a disulfide bridge. Residues His-82 and Asp-127 each act as charge relay system in the active site. 2 disulfide bridges follow: Cys-187-Cys-202 and Cys-213-Cys-242. The Charge relay system role is filled by Ser-217.

It belongs to the peptidase S1 family.

Its function is as follows. Protease that shows preferential cleavage after Arg and Lys residues. The protein is Trypsin-like protease of Streptomyces glaucescens.